A 319-amino-acid polypeptide reads, in one-letter code: Taste receptor type 2 member 14 (319 aa).

The Extracellular segment spans residues 1–7 (MDGVIKS). The helical transmembrane segment at 8-28 (IFTFILIVEFIIGNLGNSFIV) threads the bilayer. Topologically, residues 29 to 55 (LVNCIDWVKRRKISLVDQILIALAISR) are cytoplasmic. The chain crosses the membrane as a helical span at residues 56-76 (ISLVWSIFGSWCVSVFFPALF). The Extracellular segment spans residues 77–87 (ATEKLLRMLTN). 2 residues coordinate cholesterol: threonine 86 and tryptophan 89. Residues 88–108 (IWTVTNHFSVWLATILGTFYF) form a helical membrane-spanning segment. Residues 109 to 129 (LKIANFSNSIFLYLKWRVKKV) are Cytoplasmic-facing. The chain crosses the membrane as a helical span at residues 130 to 150 (VLVLLLVTLGLLFLNILLINI). Over 151-184 (HINASINGYRGNMTCSSASCNFIRFSRAIALTST) the chain is Extracellular. N-linked (GlcNAc...) asparagine glycans are attached at residues asparagine 153 and asparagine 162. Alanine 180 is a cholesterol binding site. Residues 185–205 (VFVLIPFTLSLATSLLLSFSL) traverse the membrane as a helical segment. The Cytoplasmic portion of the chain corresponds to 206–233 (WKHHKKMQHTVKGYRDVSTKAHRGVMQT). The chain crosses the membrane as a helical span at residues 234–254 (VITFLLLYAVFLLTFFISIWA). At 255 to 263 (SVRLKENQI) the chain is on the extracellular side. Residues 264–284 (IILSEMMGLAYPSGHSCVLIL) form a helical membrane-spanning segment. Cholesterol-binding residues include serine 267 and methionine 270. Topologically, residues 285 to 319 (GNKKLRQASLSVLWWLRYRFKHGEPSGHKEFRESS) are cytoplasmic.

It belongs to the G-protein coupled receptor T2R family. Core component of the TAS2R14-GNAI1 complex, consisting of TAS2R14, GNAI1, GNB1 and GNG2; within the complex interacts with GNAI1. Core component of the TAS2R14-GNAT3 complex, consisting of TAS2R14, GNAT3, GNB1 and GNG2; within the complex interacts with GNAT3. Core component of the TAS2R14-GNAS2 complex, consisting of TAS2R14, GNAS2, GNB1 and GNG2; within the complex interacts with GNAS2.

The protein localises to the membrane. It catalyses the reaction Ca(2+)(in) = Ca(2+)(out). The enzyme catalyses 3',5'-cyclic AMP(in) = 3',5'-cyclic AMP(out). Basal activity is enhanced by binding to bitter tastants, such as flufenamic acid and aristolochic acid. Regulated by cholesterol in a concentration-dependent manner. Functionally, gustducin-linked G-protein coupled receptor that plays a role in the perception of bitterness. The activity of this receptor stimulates GNAT3, activating the gustducin G-protein pathway. Likely plays a role in sensing the chemical composition of the gastrointestinal content and other extra-oral tissues via the inhibitory G-protein pathways. This is Taste receptor type 2 member 14 (TAS2R14) from Macaca mulatta (Rhesus macaque).